We begin with the raw amino-acid sequence, 681 residues long: Peroxisomal acyl-coenzyme A oxidase 2 (681 aa).

The interval 1-28 (MGNPGDRVSLGETWSREVHPDIDSERHS) is disordered. Position 9 is a phosphoserine (S9). T13 is subject to Phosphothreonine. Basic and acidic residues predominate over residues 14–28 (WSREVHPDIDSERHS). N6-succinyllysine is present on residues K66, K137, K303, K453, K561, and K667. Residues 679 to 681 (PKL) carry the Microbody targeting signal motif.

This sequence belongs to the acyl-CoA oxidase family. Homodimer. Requires FAD as cofactor. Acetylation of Lys-667 is observed in liver mitochondria from fasted mice but not from fed mice.

Its subcellular location is the peroxisome. It carries out the reaction (25R)-3alpha,7alpha,12alpha-trihydroxy-5beta-cholestan-26-oyl-CoA + A + H2O = (24R,25R)-3alpha,7alpha,12alpha,24-tetrahydroxy-5beta-cholestan-26-oyl-CoA + AH2. The enzyme catalyses (25S)-3alpha,7alpha,12alpha-trihydroxy-5beta-cholestan-26-oyl-CoA + O2 = (24E)-3alpha,7alpha,12alpha-trihydroxy-5beta-cholest-24-en-26-oyl-CoA + H2O2. Oxidizes the CoA esters of the bile acid intermediates di- and tri-hydroxycoprostanic acids. Capable of oxidizing short as well as long chain 2-methyl branched fatty acids. This is Peroxisomal acyl-coenzyme A oxidase 2 from Mus musculus (Mouse).